A 118-amino-acid chain; its full sequence is T cell receptor gamma variable 5 (118 aa).

A signal peptide spans 1-17 (MRWALLVLLAFLSPASQ). The 101-residue stretch at 18-118 (KSSNLEGGTK…GVYYCATWDR (101 aa)) folds into the Ig-like domain. Cys-41 and Cys-113 are joined by a disulfide. An N-linked (GlcNAc...) asparagine glycan is attached at Asn-106.

As to quaternary structure, gamma-delta TR is a heterodimer composed of a gamma and delta chain; disulfide-linked. The gamma-delta TR is associated with the transmembrane signaling CD3 coreceptor proteins following the stoichiometry: a single gamma-delta TR heterodimer associates with one CD3D-CD3E heterodimer, one CD3G-CD3E heterodimer and one CD247 homodimer forming a stable octameric structure. Upon activation, gamma-delta TR complex associates with FCER1G to initiate intracellular signaling.

It is found in the cell membrane. V region of the variable domain of T cell receptor (TR) gamma chain that participates in the antigen recognition. Gamma-delta TRs recognize a variety of self and foreign non-peptide antigens frequently expressed at the epithelial boundaries between the host and external environment, including endogenous lipids presented by MH-like protein CD1D and phosphoantigens presented by butyrophilin-like molecule BTN3A1. Upon antigen recognition induces rapid, innate-like immune responses involved in pathogen clearance and tissue repair. Binding of gamma-delta TR complex to antigen triggers phosphorylation of immunoreceptor tyrosine-based activation motifs (ITAMs) in the CD3 chains by the LCK and FYN kinases, allowing the recruitment, phosphorylation, and activation of ZAP70 that facilitates phosphorylation of the scaffolding proteins LCP2 and LAT. This lead to the formation of a supramolecular signalosome that recruits the phospholipase PLCG1, resulting in calcium mobilization and ERK activation, ultimately leading to T cell expansion and differentiation into effector cells. Gamma-delta TRs are produced through somatic rearrangement of a limited repertoire of variable (V), diversity (D), and joining (J) genes. The potential diversity of gamma-delta TRs is conferred by the unique ability to rearrange (D) genes in tandem and to utilize all three reading frames. The combinatorial diversity is considerably increased by the sequence exonuclease trimming and random nucleotide (N) region additions which occur during the V-(D)-J rearrangements. This is T cell receptor gamma variable 5 from Homo sapiens (Human).